A 303-amino-acid chain; its full sequence is Trans-aconitate 2-methyltransferase (303 aa).

The disordered stretch occupies residues 271–303 (EGSGGSGGSGGSAGSAGCAGSGGSVGPAGEAGR). Gly residues predominate over residues 272–303 (GSGGSGGSGGSAGSAGCAGSGGSVGPAGEAGR).

This sequence belongs to the methyltransferase superfamily. Tam family.

It localises to the cytoplasm. It carries out the reaction trans-aconitate + S-adenosyl-L-methionine = (E)-3-(methoxycarbonyl)pent-2-enedioate + S-adenosyl-L-homocysteine. Catalyzes the S-adenosylmethionine monomethyl esterification of trans-aconitate. This is Trans-aconitate 2-methyltransferase from Streptomyces coelicolor (strain ATCC BAA-471 / A3(2) / M145).